Here is a 340-residue protein sequence, read N- to C-terminus: 3-isopropylmalate dehydrogenase (340 aa).

The substrate site is built by Arg-88, Arg-98, Arg-122, and Asp-212. Mg(2+) contacts are provided by Asp-212, Asp-236, and Asp-240. 272–284 (GSAPDIAGQGIAD) lines the NAD(+) pocket.

It belongs to the isocitrate and isopropylmalate dehydrogenases family. LeuB type 2 subfamily. Homodimer. It depends on Mg(2+) as a cofactor. Mn(2+) serves as cofactor.

The protein resides in the cytoplasm. The enzyme catalyses (2R,3S)-3-isopropylmalate + NAD(+) = 4-methyl-2-oxopentanoate + CO2 + NADH. It functions in the pathway amino-acid biosynthesis; L-leucine biosynthesis; L-leucine from 3-methyl-2-oxobutanoate: step 3/4. Its function is as follows. Catalyzes the oxidation of 3-carboxy-2-hydroxy-4-methylpentanoate (3-isopropylmalate) to 3-carboxy-4-methyl-2-oxopentanoate. The product decarboxylates to 4-methyl-2 oxopentanoate. The sequence is that of 3-isopropylmalate dehydrogenase from Corynebacterium glutamicum (strain R).